A 478-amino-acid chain; its full sequence is Signal recognition particle receptor FtsY (478 aa).

Basic and acidic residues-rich tracts occupy residues Lys14–Asn33 and Ala45–Val56. Residues Lys14 to Leu94 form a disordered region. Over residues Glu71–Ala86 the composition is skewed to acidic residues. GTP contacts are provided by residues Gly283–Thr290, Asp365–Arg369, and Thr429–Asp432.

The protein belongs to the GTP-binding SRP family. FtsY subfamily. In terms of assembly, part of the signal recognition particle protein translocation system, which is composed of SRP and FtsY. SRP is a ribonucleoprotein composed of Ffh and a 4.5S RNA molecule.

It is found in the cell inner membrane. The protein localises to the cytoplasm. It catalyses the reaction GTP + H2O = GDP + phosphate + H(+). In terms of biological role, involved in targeting and insertion of nascent membrane proteins into the cytoplasmic membrane. Acts as a receptor for the complex formed by the signal recognition particle (SRP) and the ribosome-nascent chain (RNC). Interaction with SRP-RNC leads to the transfer of the RNC complex to the Sec translocase for insertion into the membrane, the hydrolysis of GTP by both Ffh and FtsY, and the dissociation of the SRP-FtsY complex into the individual components. The polypeptide is Signal recognition particle receptor FtsY (Agrobacterium fabrum (strain C58 / ATCC 33970) (Agrobacterium tumefaciens (strain C58))).